The primary structure comprises 313 residues: Nucleotide-binding protein Swit_0399 (313 aa).

Position 20–27 (20–27 (GMSGSGKK)) interacts with ATP. Residue 73 to 76 (DSRT) coordinates GTP. Residues 289–313 (PTVRHRDLTRQKSNAEESTVPGVGS) form a disordered region. The span at 292-303 (RHRDLTRQKSNA) shows a compositional bias: basic and acidic residues.

Belongs to the RapZ-like family.

Functionally, displays ATPase and GTPase activities. This Rhizorhabdus wittichii (strain DSM 6014 / CCUG 31198 / JCM 15750 / NBRC 105917 / EY 4224 / RW1) (Sphingomonas wittichii) protein is Nucleotide-binding protein Swit_0399.